Here is a 130-residue protein sequence, read N- to C-terminus: Sec-independent protein translocase protein TatB (130 aa).

Residues methionine 1–glycine 21 traverse the membrane as a helical segment. A disordered region spans residues valine 70 to serine 130. Basic and acidic residues-rich tracts occupy residues glutamate 80–aspartate 89 and proline 96–proline 111.

It belongs to the TatB family. The Tat system comprises two distinct complexes: a TatABC complex, containing multiple copies of TatA, TatB and TatC subunits, and a separate TatA complex, containing only TatA subunits. Substrates initially bind to the TatABC complex, which probably triggers association of the separate TatA complex to form the active translocon.

It localises to the cell inner membrane. Its function is as follows. Part of the twin-arginine translocation (Tat) system that transports large folded proteins containing a characteristic twin-arginine motif in their signal peptide across membranes. Together with TatC, TatB is part of a receptor directly interacting with Tat signal peptides. TatB may form an oligomeric binding site that transiently accommodates folded Tat precursor proteins before their translocation. This chain is Sec-independent protein translocase protein TatB, found in Nitrosomonas eutropha (strain DSM 101675 / C91 / Nm57).